The sequence spans 351 residues: Phospho-N-acetylmuramoyl-pentapeptide-transferase (351 aa).

The next 10 helical transmembrane spans lie at 17-37 (TAYATIFAFLLALIFGPFIIL), 63-83 (IPTMGGILIFFCVLVSLFFWI), 85-105 (LWNVYFLIVLFVMISFACLGF), 135-155 (ISVTMLYYFGGEHISIIYFPF), 158-178 (SLKLDLGVLYIPFGMFILISA), 190-210 (GLAIGLSIVVTGALVIIAYLT), 230-250 (LVIFLGALLGGSFGFLWFNAY), 254-274 (IMMGDTGSLSIGAVLGMTALI), 279-299 (ILFAILAGVFVLETLSVIIQV), and 328-348 (QVVIRFWIIGLIFAIIALSTL).

It belongs to the glycosyltransferase 4 family. MraY subfamily. It depends on Mg(2+) as a cofactor.

Its subcellular location is the cell inner membrane. The enzyme catalyses UDP-N-acetyl-alpha-D-muramoyl-L-alanyl-gamma-D-glutamyl-meso-2,6-diaminopimeloyl-D-alanyl-D-alanine + di-trans,octa-cis-undecaprenyl phosphate = di-trans,octa-cis-undecaprenyl diphospho-N-acetyl-alpha-D-muramoyl-L-alanyl-D-glutamyl-meso-2,6-diaminopimeloyl-D-alanyl-D-alanine + UMP. The protein operates within cell wall biogenesis; peptidoglycan biosynthesis. Functionally, catalyzes the initial step of the lipid cycle reactions in the biosynthesis of the cell wall peptidoglycan: transfers peptidoglycan precursor phospho-MurNAc-pentapeptide from UDP-MurNAc-pentapeptide onto the lipid carrier undecaprenyl phosphate, yielding undecaprenyl-pyrophosphoryl-MurNAc-pentapeptide, known as lipid I. This is Phospho-N-acetylmuramoyl-pentapeptide-transferase from Borrelia hermsii (strain HS1 / DAH).